Consider the following 179-residue polypeptide: Ribosome maturation factor RimM (179 aa).

In terms of domain architecture, PRC barrel spans 102 to 179; sequence DGEYYWYQLE…EMKVDWDADF (78 aa).

It belongs to the RimM family. In terms of assembly, binds ribosomal protein uS19.

It is found in the cytoplasm. An accessory protein needed during the final step in the assembly of 30S ribosomal subunit, possibly for assembly of the head region. Essential for efficient processing of 16S rRNA. May be needed both before and after RbfA during the maturation of 16S rRNA. It has affinity for free ribosomal 30S subunits but not for 70S ribosomes. This chain is Ribosome maturation factor RimM, found in Pseudomonas savastanoi pv. phaseolicola (strain 1448A / Race 6) (Pseudomonas syringae pv. phaseolicola (strain 1448A / Race 6)).